A 427-amino-acid chain; its full sequence is Glutamate-1-semialdehyde 2,1-aminomutase (427 aa).

Lys265 carries the N6-(pyridoxal phosphate)lysine modification.

This sequence belongs to the class-III pyridoxal-phosphate-dependent aminotransferase family. HemL subfamily. In terms of assembly, homodimer. Pyridoxal 5'-phosphate serves as cofactor.

Its subcellular location is the cytoplasm. It carries out the reaction (S)-4-amino-5-oxopentanoate = 5-aminolevulinate. It functions in the pathway porphyrin-containing compound metabolism; protoporphyrin-IX biosynthesis; 5-aminolevulinate from L-glutamyl-tRNA(Glu): step 2/2. In Bordetella parapertussis (strain 12822 / ATCC BAA-587 / NCTC 13253), this protein is Glutamate-1-semialdehyde 2,1-aminomutase.